The primary structure comprises 498 residues: Neoxanthin synthase, chloroplastic (498 aa).

The N-terminal 42 residues, 1 to 42 (METLLKPFPSLLLSSPTPYRSIVQQNPSFLSPTTKKKSRKCL), are a transit peptide targeting the chloroplast.

This sequence belongs to the lycopene cyclase family. In terms of tissue distribution, expressed exclusively in chromoplast-containing tissues of flowers and fruits. Expressed in preanthesis flowers.

Its subcellular location is the plastid. The protein resides in the chloroplast. It catalyses the reaction all-trans-violaxanthin = all-trans-neoxanthin. It carries out the reaction a carotenoid psi-end group = a carotenoid beta-end derivative. It participates in carotenoid biosynthesis; neoxanthin biosynthesis. Its pathway is carotenoid biosynthesis; beta-carotene biosynthesis. Functionally, involved in the synthesis of neoxanthin, the last product of carotenoid synthesis and a precursor of abscisic acid. Involved in the beta-carotene biosynthesis. In Solanum lycopersicum (Tomato), this protein is Neoxanthin synthase, chloroplastic.